We begin with the raw amino-acid sequence, 3658 residues long: E3 ubiquitin-protein ligase UPL2 (3658 aa).

Positions 884–893 (DEKKSVDRAS) are enriched in basic and acidic residues. Residues 884–914 (DEKKSVDRASDNSVSASSSTAERESDEDSSN) form a disordered region. Low complexity predominate over residues 894-903 (DNSVSASSST). A UBA domain is found at 1271 to 1312 (QPDEAIVGMIVEMGFSRSRAEDALRRVGTNSVEMAMDWLFTN). A UIM domain is found at 1318 to 1337 (QEDDELAQALALSLGNSSET). Disordered stretches follow at residues 1331-1360 (LGNSSETPKLEDTEKPVDVPQEEAEPKEPP), 1702-1733 (VSGSEHGFSLNEPLGISENKLHDGSGKCSKSH), 2004-2038 (AEQLKSEVPNEQKNTDSDERHDSHGTSTSTEVDEL), 2052-2072 (VDNGQEQPQVSSQSEGERGSS), 2113-2204 (HVED…DDMV), 2293-2313 (PLFSRPSQTGNTASVSASAGS), 2417-2487 (ERET…EGGG), 2503-2591 (SAQG…PEVN), and 2958-2987 (SPSSGVPEKLENKPVGEEASSETQKDAESE). Residues 1338–1347 (PKLEDTEKPV) show a composition bias toward basic and acidic residues. Residues 2007 to 2027 (LKSEVPNEQKNTDSDERHDSH) show a composition bias toward basic and acidic residues. A compositionally biased stretch (polar residues) spans 2028 to 2038 (GTSTSTEVDEL). Composition is skewed to acidic residues over residues 2117–2144 (RADDDVDDDMDDEGEDDEGDDEDADSVE) and 2156–2204 (DVED…DDMV). The segment covering 2297-2313 (RPSQTGNTASVSASAGS) has biased composition (polar residues). A compositionally biased stretch (low complexity) spans 2422-2431 (TTEVQEQQQP). The segment covering 2503–2518 (SAQGQSDTSGIQNVSV) has biased composition (polar residues). S2582 is subject to Phosphoserine. The region spanning 3317-3658 (SPQDLKGRLN…HEANEGFGFA (342 aa)) is the HECT domain. C3625 acts as the Glycyl thioester intermediate in catalysis.

The protein belongs to the UPL family. TOM1/PTR1 subfamily. As to expression, widely expressed. Expressed in root, stem, cauline and rosette leaf, seedling and flower (at protein level).

The enzyme catalyses S-ubiquitinyl-[E2 ubiquitin-conjugating enzyme]-L-cysteine + [acceptor protein]-L-lysine = [E2 ubiquitin-conjugating enzyme]-L-cysteine + N(6)-ubiquitinyl-[acceptor protein]-L-lysine.. The protein operates within protein modification; protein ubiquitination. Its function is as follows. Probable E3 ubiquitin-protein ligase which mediates ubiquitination and subsequent proteasomal degradation of target proteins. In Arabidopsis thaliana (Mouse-ear cress), this protein is E3 ubiquitin-protein ligase UPL2 (UPL2).